Here is a 298-residue protein sequence, read N- to C-terminus: Acetylglutamate kinase (298 aa).

Residues 67-68, R89, and N193 each bind substrate; that span reads GG.

It belongs to the acetylglutamate kinase family. ArgB subfamily.

The protein localises to the cytoplasm. The catalysed reaction is N-acetyl-L-glutamate + ATP = N-acetyl-L-glutamyl 5-phosphate + ADP. Its pathway is amino-acid biosynthesis; L-arginine biosynthesis; N(2)-acetyl-L-ornithine from L-glutamate: step 2/4. Functionally, catalyzes the ATP-dependent phosphorylation of N-acetyl-L-glutamate. The protein is Acetylglutamate kinase of Desulfitobacterium hafniense (strain DSM 10664 / DCB-2).